A 464-amino-acid polypeptide reads, in one-letter code: Argininosuccinate lyase (464 aa).

This sequence belongs to the lyase 1 family. Argininosuccinate lyase subfamily.

The protein localises to the cytoplasm. It carries out the reaction 2-(N(omega)-L-arginino)succinate = fumarate + L-arginine. It participates in amino-acid biosynthesis; L-arginine biosynthesis; L-arginine from L-ornithine and carbamoyl phosphate: step 3/3. The sequence is that of Argininosuccinate lyase from Frankia casuarinae (strain DSM 45818 / CECT 9043 / HFP020203 / CcI3).